The chain runs to 509 residues: Maturase K (509 aa).

It belongs to the intron maturase 2 family. MatK subfamily.

It localises to the plastid. It is found in the chloroplast. Its function is as follows. Usually encoded in the trnK tRNA gene intron. Probably assists in splicing its own and other chloroplast group II introns. This Solanum bulbocastanum (Wild potato) protein is Maturase K.